We begin with the raw amino-acid sequence, 101 residues long: Small ribosomal subunit protein uS14A (101 aa).

The interval 32–71 (RRPGTPEPERNRAVEELRRQPRDASATRVRNRDSVDGRPR) is disordered. Composition is skewed to basic and acidic residues over residues 38–53 (EPER…RQPR) and 61–70 (RNRDSVDGRP).

It belongs to the universal ribosomal protein uS14 family. As to quaternary structure, part of the 30S ribosomal subunit. Contacts proteins S3 and S10.

Functionally, binds 16S rRNA, required for the assembly of 30S particles and may also be responsible for determining the conformation of the 16S rRNA at the A site. This chain is Small ribosomal subunit protein uS14A, found in Streptomyces griseus subsp. griseus (strain JCM 4626 / CBS 651.72 / NBRC 13350 / KCC S-0626 / ISP 5235).